A 161-amino-acid chain; its full sequence is Nucleotide-binding protein Pfl01_4421 (161 aa).

It belongs to the YajQ family.

In terms of biological role, nucleotide-binding protein. The sequence is that of Nucleotide-binding protein Pfl01_4421 from Pseudomonas fluorescens (strain Pf0-1).